The following is a 202-amino-acid chain: uncharacterized protein (202 aa).

The tract at residues 178–202 is disordered; sequence VCSSEDSEADRYSDYGWGGPSSPFN.

This is an uncharacterized protein from Homo sapiens (Human).